Consider the following 462-residue polypeptide: Nuclear factor interleukin-3-regulated protein (462 aa).

A disordered region spans residues 1 to 22 (MQLRKMQTIKKEPAPLDPTSSS). Lysine 24 participates in a covalent cross-link: Glycyl lysine isopeptide (Lys-Gly) (interchain with G-Cter in SUMO2). A bZIP domain is found at 73–136 (DAMYWEKRRK…GLISSTAYAQ (64 aa)). Residues 79–95 (KRRKNNEAAKRSREKRR) are basic motif. The leucine-zipper stretch occupies residues 99 to 106 (LVLENKLI). Residues 188-214 (SDVSEVSSVEHTQESPAQGGCRSPENK) are disordered. Residue lysine 214 forms a Glycyl lysine isopeptide (Lys-Gly) (interchain with G-Cter in SUMO2) linkage. Residue lysine 219 forms a Glycyl lysine isopeptide (Lys-Gly) (interchain with G-Cter in SUMO1); alternate linkage. A Glycyl lysine isopeptide (Lys-Gly) (interchain with G-Cter in SUMO2); alternate cross-link involves residue lysine 219. Residues 259–298 (PPLLQVHGSTSNSPRTSEADEGVVGKSSDGEDEQQVPKGP) are disordered. The span at 265-274 (HGSTSNSPRT) shows a compositional bias: polar residues. A necessary for transcriptional repression and sufficient for interaction with PER2 region spans residues 281-420 (VVGKSSDGED…FKTGVVEVKD (140 aa)). Serine 301 carries the post-translational modification Phosphoserine. Residues lysine 314, lysine 326, lysine 332, lysine 337, and lysine 350 each participate in a glycyl lysine isopeptide (Lys-Gly) (interchain with G-Cter in SUMO2) cross-link. Serine 353 carries the phosphoserine modification. Residues lysine 360, lysine 394, lysine 401, lysine 406, lysine 412, lysine 419, lysine 424, lysine 434, and lysine 448 each participate in a glycyl lysine isopeptide (Lys-Gly) (interchain with G-Cter in SUMO2) cross-link.

The protein belongs to the bZIP family. NFIL3 subfamily. In terms of assembly, homodimer. Binds DNA as a dimer. Interacts with DR1. Interacts with PER2 and CRY2. Interacts with NR0B2. Interacts with NR1D1. Interacts with MYSM1. As to expression, expressed in suprachiasmatic nucleus and liver (at protein level). Expressed in suprachiasmatic nucleus, hippocampus, gyrus dentatus, piriform cortex, internal granular layer of olfactory bulb, dorsomedial hypothalamic nucleus, pontine nuclei, granular layer of cerebellum, liver and calvariae osteoblasts. Expressed in natural killer cell precursors in bone marrow.

The protein resides in the nucleus. Acts as a transcriptional regulator that recognizes and binds to the sequence 5'-[GA]TTA[CT]GTAA[CT]-3', a sequence present in many cellular and viral promoters. Represses transcription from promoters with activating transcription factor (ATF) sites. Represses promoter activity in osteoblasts. Represses transcriptional activity of PER1. Represses transcriptional activity of PER2 via the B-site on the promoter. Activates transcription from the interleukin-3 promoter in T-cells. Competes for the same consensus-binding site with PAR DNA-binding factors (DBP, HLF and TEF). Component of the circadian clock that acts as a negative regulator for the circadian expression of PER2 oscillation in the cell-autonomous core clock. Protects pro-B cells from programmed cell death. Represses the transcription of CYP2A5. Positively regulates the expression and activity of CES2 by antagonizing the repressive action of NR1D1 on CES2. Required for the development of natural killer cell precursors. The protein is Nuclear factor interleukin-3-regulated protein (Nfil3) of Mus musculus (Mouse).